The chain runs to 396 residues: Obg-like ATPase 1 (396 aa).

Positions 23–283 constitute an OBG-type G domain; the sequence is LKIGIVGLPN…LSAEERQKYL (261 aa). Position 32–37 (32–37) interacts with ATP; it reads NVGKST. Positions 36 and 56 each coordinate Mg(2+). Position 231 (Leu231) interacts with ATP. Positions 267–274 match the Nuclear export signal motif; that stretch reads LELKLQEL. Lys294 is modified (N6-acetyllysine). In terms of domain architecture, TGS spans 304–387; that stretch reads QLEYFFTAGP…EDGDIIFFKF (84 aa).

Belongs to the TRAFAC class OBG-HflX-like GTPase superfamily. OBG GTPase family. YchF/OLA1 subfamily. In terms of assembly, monomer. Mg(2+) serves as cofactor.

It is found in the cytoplasm. The protein localises to the nucleus. Its subcellular location is the nucleolus. Functionally, hydrolyzes ATP, and can also hydrolyze GTP with lower efficiency. Has lower affinity for GTP. In Pongo abelii (Sumatran orangutan), this protein is Obg-like ATPase 1.